The sequence spans 361 residues: Glutaminyl-peptide cyclotransferase (361 aa).

The N-terminal stretch at 1–28 (MAGCRDPRVVDTLHLLLLVAVLPLAVSG) is a signal peptide. N-linked (GlcNAc...) asparagine glycosylation is present at asparagine 49. Cysteine 139 and cysteine 164 are oxidised to a cystine. Residue aspartate 159 coordinates Zn(2+). N-linked (GlcNAc...) asparagine glycosylation occurs at asparagine 183. The active-site Proton acceptor is glutamate 201. Zn(2+) is bound at residue glutamate 202. Aspartate 248 acts as the Proton acceptor in catalysis. Residue histidine 330 participates in Zn(2+) binding.

Belongs to the glutaminyl-peptide cyclotransferase family. In terms of tissue distribution, expressed mainly in brain tissue.

The protein resides in the secreted. The catalysed reaction is N-terminal L-glutaminyl-[peptide] = N-terminal 5-oxo-L-prolyl-[peptide] + NH4(+). Its function is as follows. Responsible for the biosynthesis of pyroglutamyl peptides. Has a bias against acidic and tryptophan residues adjacent to the N-terminal glutaminyl residue and a lack of importance of chain length after the second residue. Also catalyzes N-terminal pyroglutamate formation. This Bos taurus (Bovine) protein is Glutaminyl-peptide cyclotransferase (QPCT).